The chain runs to 714 residues: Protein HAPLESS 2-B (714 aa).

The N-terminal stretch at Met-1–Gly-33 is a signal peptide. Residues Val-34–Arg-552 are Extracellular-facing. Cystine bridges form between Cys-45–Cys-59, Cys-134–Cys-164, Cys-146–Cys-194, Cys-165–Cys-321, Cys-167–Cys-177, Cys-304–Cys-328, and Cys-441–Cys-479. A helical membrane pass occupies residues Cys-553–Leu-573. At His-574–His-714 the chain is on the cytoplasmic side. A disordered region spans residues Arg-597–Arg-619. Residues Ala-598–Arg-619 are compositionally biased toward basic residues.

The protein belongs to the HAP2/GCS1 family.

It localises to the endoplasmic reticulum membrane. The protein localises to the cell membrane. Its function is as follows. Required for male fertility. Plays a role in pollen tube guidance and successful gamete attachment. Essential for the fusion of gametes during double fertilization, where one male gamete fuses with the egg to produce a zygote, and another male gamete fuses with the central cell to produce the endosperm. Mediates the fusion of cell membranes. Not required for pollen tube outgrowth. The polypeptide is Protein HAPLESS 2-B (HAP2B) (Oryza sativa subsp. japonica (Rice)).